The primary structure comprises 310 residues: 4-hydroxyproline 2-epimerase (310 aa).

Cys88 serves as the catalytic Proton acceptor. Residues 89 to 90 (GH), His208, and Asp232 each bind substrate. Catalysis depends on Cys236, which acts as the Proton donor. Position 237–238 (237–238 (GT)) interacts with substrate.

Belongs to the proline racemase family.

The enzyme catalyses trans-4-hydroxy-L-proline = cis-4-hydroxy-D-proline. Functionally, catalyzes the epimerization of trans-4-hydroxy-L-proline (t4LHyp) to cis-4-hydroxy-D-proline (c4DHyp). Is likely involved in a degradation pathway that converts t4LHyp to alpha-ketoglutarate. Displays no proline racemase activity. This Acinetobacter baumannii (strain AYE) protein is 4-hydroxyproline 2-epimerase.